The primary structure comprises 142 residues: Coactosin-like protein (142 aa).

Alanine 2 bears the N-acetylalanine mark. The ADF-H domain maps to 2–130 (ATKIDKEACR…EEDFIRSELK (129 aa)). Serine 23 is modified (phosphoserine). Residues 66–75 (TGDAMSKRSK) are flexible and important for F-actin binding. An N6-acetyllysine modification is found at lysine 102. Serine 141 is modified (phosphoserine).

Belongs to the actin-binding proteins ADF family. Coactosin subfamily. Interacts with 5-lipoxygenase (ALOX5/5LO) in a calcium-independent manner. Binds to F-actin with a stoichiometry of 1:2.

The protein localises to the cytoplasm. It localises to the cytoskeleton. Its subcellular location is the nucleus. In terms of biological role, binds to F-actin in a calcium-independent manner. Has no direct effect on actin depolymerization. Acts as a chaperone for ALOX5 (5LO), influencing both its stability and activity in leukotrienes synthesis. In Rattus norvegicus (Rat), this protein is Coactosin-like protein.